A 250-amino-acid chain; its full sequence is tRNA (guanine-N(1)-)-methyltransferase (250 aa).

S-adenosyl-L-methionine-binding positions include glycine 116 and 136–141 (IGDYVL).

This sequence belongs to the RNA methyltransferase TrmD family. Homodimer.

The protein resides in the cytoplasm. It carries out the reaction guanosine(37) in tRNA + S-adenosyl-L-methionine = N(1)-methylguanosine(37) in tRNA + S-adenosyl-L-homocysteine + H(+). Its function is as follows. Specifically methylates guanosine-37 in various tRNAs. This is tRNA (guanine-N(1)-)-methyltransferase from Pseudomonas entomophila (strain L48).